The following is a 79-amino-acid chain: Small ribosomal subunit protein uS17 (79 aa).

The protein belongs to the universal ribosomal protein uS17 family. As to quaternary structure, part of the 30S ribosomal subunit.

Functionally, one of the primary rRNA binding proteins, it binds specifically to the 5'-end of 16S ribosomal RNA. The sequence is that of Small ribosomal subunit protein uS17 from Rhizobium johnstonii (strain DSM 114642 / LMG 32736 / 3841) (Rhizobium leguminosarum bv. viciae).